A 491-amino-acid chain; its full sequence is Protein nucleotidyltransferase YdiU (491 aa).

Residues Gly92, Gly94, Arg95, Lys115, Asp127, Gly128, Arg178, and Arg185 each coordinate ATP. The active-site Proton acceptor is the Asp254. Mg(2+) is bound by residues Asn255 and Asp264. Asp264 contacts ATP.

It belongs to the SELO family. Mg(2+) is required as a cofactor. Mn(2+) serves as cofactor.

The enzyme catalyses L-seryl-[protein] + ATP = 3-O-(5'-adenylyl)-L-seryl-[protein] + diphosphate. The catalysed reaction is L-threonyl-[protein] + ATP = 3-O-(5'-adenylyl)-L-threonyl-[protein] + diphosphate. It catalyses the reaction L-tyrosyl-[protein] + ATP = O-(5'-adenylyl)-L-tyrosyl-[protein] + diphosphate. It carries out the reaction L-histidyl-[protein] + UTP = N(tele)-(5'-uridylyl)-L-histidyl-[protein] + diphosphate. The enzyme catalyses L-seryl-[protein] + UTP = O-(5'-uridylyl)-L-seryl-[protein] + diphosphate. The catalysed reaction is L-tyrosyl-[protein] + UTP = O-(5'-uridylyl)-L-tyrosyl-[protein] + diphosphate. Its function is as follows. Nucleotidyltransferase involved in the post-translational modification of proteins. It can catalyze the addition of adenosine monophosphate (AMP) or uridine monophosphate (UMP) to a protein, resulting in modifications known as AMPylation and UMPylation. The chain is Protein nucleotidyltransferase YdiU from Pseudarthrobacter chlorophenolicus (strain ATCC 700700 / DSM 12829 / CIP 107037 / JCM 12360 / KCTC 9906 / NCIMB 13794 / A6) (Arthrobacter chlorophenolicus).